The chain runs to 726 residues: DNA ligase (726 aa).

NAD(+) is bound by residues 34-38 (DAEYD), 83-84 (SL), and E115. The active-site N6-AMP-lysine intermediate is K117. 4 residues coordinate NAD(+): R138, E190, K306, and K330. The Zn(2+) site is built by C424, C427, C442, and C448. In terms of domain architecture, BRCT spans 608–698 (SRGNALAGKT…RTADDQATPA (91 aa)). Residues 690–726 (TADDQATPASDRRAATASVPPSDDAPGSPRQLDFDLT) form a disordered region.

The protein belongs to the NAD-dependent DNA ligase family. LigA subfamily. Requires Mg(2+) as cofactor. It depends on Mn(2+) as a cofactor.

The enzyme catalyses NAD(+) + (deoxyribonucleotide)n-3'-hydroxyl + 5'-phospho-(deoxyribonucleotide)m = (deoxyribonucleotide)n+m + AMP + beta-nicotinamide D-nucleotide.. Its function is as follows. DNA ligase that catalyzes the formation of phosphodiester linkages between 5'-phosphoryl and 3'-hydroxyl groups in double-stranded DNA using NAD as a coenzyme and as the energy source for the reaction. It is essential for DNA replication and repair of damaged DNA. The protein is DNA ligase of Roseiflexus sp. (strain RS-1).